The following is a 435-amino-acid chain: Evolutionarily conserved signaling intermediate in Toll pathway, mitochondrial (435 aa).

The N-terminal 48 residues, Met1–His48, are a transit peptide targeting the mitochondrion. Residue Lys372 forms a Glycyl lysine isopeptide (Lys-Gly) (interchain with G-Cter in ubiquitin) linkage. The segment at Leu401 to Ser435 is disordered.

This sequence belongs to the ECSIT family. In terms of assembly, interacts with MAP3K1, SMAD4 and TRAF6. Interacts with SMAD1 only after BMP4-treatment. Part of the mitochondrial complex I assembly/MCIA complex that comprises at least the core subunits TMEM126B, NDUFAF1, ECSIT and ACAD9 and complement subunits such as COA1 and TMEM186. Interacts with NDUFAF1. Interacts with ACAD9. Interacts with TRIM59. Interacts with TMEM70 and TMEM242. Interacts (when ubiquitinated) with NF-kappa-B subunits RELA and NFKB1. Interacts with RIGI, IFIT1 and MAVS; these interactions promote RLR-mediated type I IFN induction. Interacts with SQSTM1; this interaction inhibits TLR4 signaling via functional regulation of the TRAF6-ECSIT complex. Interacts with cereblon/CRBN; this interaction inhibits the ubiquitination of ECSIT. Post-translationally, ubiquitinated on Lys-372; leading to translocation in the nucleus together with RELA and NFKB1 and expression of NF-kappa-B-dependent genes. In terms of tissue distribution, detected in heart, brain, lung, liver, skeletal muscle, kidney and testis. Detected in embryonic mesoderm and epiblast, and in extraembryonic ectoderm.

Its subcellular location is the cytoplasm. The protein resides in the nucleus. It localises to the mitochondrion. Functionally, adapter protein that plays a role in different signaling pathways including TLRs and IL-1 pathways or innate antiviral induction signaling. Plays a role in the activation of NF-kappa-B by forming a signal complex with TRAF6 and TAK1/MAP3K7 to activate TAK1/MAP3K7 leading to activation of IKKs. Once ubiquitinated, interacts with the dissociated RELA and NFKB1 proteins and translocates to the nucleus where it induces NF-kappa-B-dependent gene expression. Plays a role in innate antiviral immune response by bridging the pattern recognition receptors RIGI and MDA5/IFIT1 to the MAVS complex at the mitochondrion. Promotes proteolytic activation of MAP3K1. Involved in the BMP signaling pathway. Required for normal embryonic development. Its function is as follows. As part of the MCIA complex, involved in the assembly of the mitochondrial complex I. The sequence is that of Evolutionarily conserved signaling intermediate in Toll pathway, mitochondrial from Mus musculus (Mouse).